A 940-amino-acid chain; its full sequence is UvrABC system protein A (940 aa).

32–39 (GLSGSGKS) contributes to the ATP binding site. The C4-type zinc-finger motif lies at 252–279 (CIDCGISIDEISPRLFSFNSPFGKCDYC). ABC transporter domains follow at residues 309–589 (WANT…EGSL) and 609–937 (SNGK…HYLK). Residue 641-648 (GVSGSGKS) coordinates ATP. A C4-type zinc finger spans residues 740–766 (CEACKGDGIIKIEMQFLSDVYVPCEIC).

This sequence belongs to the ABC transporter superfamily. UvrA family. Forms a heterotetramer with UvrB during the search for lesions.

It localises to the cytoplasm. Functionally, the UvrABC repair system catalyzes the recognition and processing of DNA lesions. UvrA is an ATPase and a DNA-binding protein. A damage recognition complex composed of 2 UvrA and 2 UvrB subunits scans DNA for abnormalities. When the presence of a lesion has been verified by UvrB, the UvrA molecules dissociate. This chain is UvrABC system protein A, found in Clostridium tetani (strain Massachusetts / E88).